A 444-amino-acid polypeptide reads, in one-letter code: Vacuolar protein sorting-associated protein 4B (444 aa).

Residues 4–82 enclose the MIT domain; sequence TSPNLQKAID…KEYLKNKEKK (79 aa). Positions 19–82 form a coiled coil; the sequence is AQEDKAGNYE…KEYLKNKEKK (64 aa). Residues 78-88 are compositionally biased toward basic and acidic residues; it reads NKEKKAQKPVK. The interval 78-117 is disordered; that stretch reads NKEKKAQKPVKEGQPSPADEKGNDSDGEGESDDPEKKKLQ. Residues Ser93, Ser102, and Ser108 each carry the phosphoserine modification. 174-181 is an ATP binding site; it reads GPPGTGKS. Residue Ser410 is modified to Phosphoserine.

This sequence belongs to the AAA ATPase family. As to quaternary structure, proposed to be monomeric or homodimeric in nucleotide-free form and to oligomerize upon binding to ATP to form two stacked hexameric or heptameric rings with a central pore through which ESCRT-III substrates are translocated in an ATP-dependent manner. In vitro, associates on the inside of a helical tubular structure formed by a CHMP2A-CHMP3 polymer. Interacts with CHMP1A, CHMP1B, CHMP2A, CHMP4B and CHMP6. Interacts with VPS4A; the interaction suggests a heteromeric assembly with VPS4A. Interacts with VTA1.

The protein localises to the late endosome membrane. The catalysed reaction is ATP + H2O = ADP + phosphate + H(+). In terms of biological role, involved in late steps of the endosomal multivesicular bodies (MVB) pathway. Recognizes membrane-associated ESCRT-III assemblies and catalyzes their disassembly, possibly in combination with membrane fission. Redistributes the ESCRT-III components to the cytoplasm for further rounds of MVB sorting. MVBs contain intraluminal vesicles (ILVs) that are generated by invagination and scission from the limiting membrane of the endosome and mostly are delivered to lysosomes enabling degradation of membrane proteins, such as stimulated growth factor receptors, lysosomal enzymes and lipids. VPS4A/B are required for the exosomal release of SDCBP, CD63 and syndecan. Functionally, (Microbial infection) In conjunction with the ESCRT machinery also appears to function in topologically equivalent membrane fission events, such as the terminal stages of cytokinesis and enveloped virus budding (lentiviruses). The polypeptide is Vacuolar protein sorting-associated protein 4B (VPS4B) (Pongo abelii (Sumatran orangutan)).